Consider the following 510-residue polypeptide: Maturase K (510 aa).

The protein belongs to the intron maturase 2 family. MatK subfamily.

It is found in the plastid. Its subcellular location is the chloroplast. Usually encoded in the trnK tRNA gene intron. Probably assists in splicing its own and other chloroplast group II introns. This is Maturase K from Grahamia bracteata.